We begin with the raw amino-acid sequence, 308 residues long: MIITSERISLKHLLTAEALTDREVMGLIRRAGEFKQGAKWHPEERQYFATNLFFENSTRTHKSFEVAEKKLGLEVIEFEASRSSVQKGETLYDTVLTMSAIGVDVAVIRHGKENYYDELIQSKTIQCSIINGGDGSGQHPTQCLLDLMTIYEEFGGFEGLKVAIVGDITHSRVAKSNMQLLNRLGAEIYFSGPEEWYDHQFDVYGQYVPLDEIVEKVDVMMLLRVQHERHDGKESFSKEGYHLEYGLTNERATRLQKHAIIMHPAPVNRDVELADELVESLQSRIVAQMSNGVFMRMAILEAILHGKA.

Carbamoyl phosphate contacts are provided by arginine 59 and threonine 60. Lysine 87 contacts L-aspartate. The carbamoyl phosphate site is built by arginine 109, histidine 139, and glutamine 142. The L-aspartate site is built by arginine 172 and arginine 224. The carbamoyl phosphate site is built by alanine 265 and proline 266.

The protein belongs to the aspartate/ornithine carbamoyltransferase superfamily. ATCase family. Heterododecamer (2C3:3R2) of six catalytic PyrB chains organized as two trimers (C3), and six regulatory PyrI chains organized as three dimers (R2).

The catalysed reaction is carbamoyl phosphate + L-aspartate = N-carbamoyl-L-aspartate + phosphate + H(+). The protein operates within pyrimidine metabolism; UMP biosynthesis via de novo pathway; (S)-dihydroorotate from bicarbonate: step 2/3. In terms of biological role, catalyzes the condensation of carbamoyl phosphate and aspartate to form carbamoyl aspartate and inorganic phosphate, the committed step in the de novo pyrimidine nucleotide biosynthesis pathway. The sequence is that of Aspartate carbamoyltransferase catalytic subunit from Enterococcus faecalis (strain ATCC 700802 / V583).